We begin with the raw amino-acid sequence, 1783 residues long: uncharacterized protein (1783 aa).

Residues 16–36 (FFLLFGIIFVLFSIIFLETSI) traverse the membrane as a helical segment. Residues 105–119 (GSDSGQSNGSGDNQN) are compositionally biased toward low complexity. Positions 105–125 (GSDSGQSNGSGDNQNKTIPRK) are disordered. 8 consecutive transmembrane segments (helical) span residues 917-937 (VSTVIAIFLIILALYLIILLI), 967-987 (VFAGIVAIVSSFLGVLFAFLL), 1010-1030 (WLSFFGSFFITFFVFEFISWI), 1084-1104 (LFTYVGLSSVALLLIGIAGTI), 1660-1680 (FLLGTIIPFIFITCVVLGISM), 1709-1729 (FIPAFVLALLISIGVLAGVLI), 1730-1750 (GIQAVVFNVAQVFLTNVFEFL), and 1752-1772 (YMVGIVLFGVTIFVIGSYFWI).

It belongs to the ABC-4 integral membrane protein family.

Its subcellular location is the cell membrane. This is an uncharacterized protein from Mycoplasma genitalium (strain ATCC 33530 / DSM 19775 / NCTC 10195 / G37) (Mycoplasmoides genitalium).